Here is a 518-residue protein sequence, read N- to C-terminus: Probable lysine--tRNA ligase, cytoplasmic (518 aa).

Belongs to the class-II aminoacyl-tRNA synthetase family. Homodimer.

The protein resides in the cytoplasm. The catalysed reaction is tRNA(Lys) + L-lysine + ATP = L-lysyl-tRNA(Lys) + AMP + diphosphate. This chain is Probable lysine--tRNA ligase, cytoplasmic, found in Enterocytozoon bieneusi (strain H348) (Microsporidian parasite).